Consider the following 253-residue polypeptide: 1-(5-phosphoribosyl)-5-[(5-phosphoribosylamino)methylideneamino] imidazole-4-carboxamide isomerase (253 aa).

The Proton acceptor role is filled by aspartate 8. Aspartate 131 functions as the Proton donor in the catalytic mechanism.

Belongs to the HisA/HisF family.

It localises to the cytoplasm. The enzyme catalyses 1-(5-phospho-beta-D-ribosyl)-5-[(5-phospho-beta-D-ribosylamino)methylideneamino]imidazole-4-carboxamide = 5-[(5-phospho-1-deoxy-D-ribulos-1-ylimino)methylamino]-1-(5-phospho-beta-D-ribosyl)imidazole-4-carboxamide. Its pathway is amino-acid biosynthesis; L-histidine biosynthesis; L-histidine from 5-phospho-alpha-D-ribose 1-diphosphate: step 4/9. This chain is 1-(5-phosphoribosyl)-5-[(5-phosphoribosylamino)methylideneamino] imidazole-4-carboxamide isomerase, found in Polynucleobacter asymbioticus (strain DSM 18221 / CIP 109841 / QLW-P1DMWA-1) (Polynucleobacter necessarius subsp. asymbioticus).